We begin with the raw amino-acid sequence, 701 residues long: DNA ligase (701 aa).

Residues 43–47, 92–93, and Glu-126 each bind NAD(+); these read DAAYD and SL. The N6-AMP-lysine intermediate role is filled by Lys-128. Arg-149, Glu-186, Lys-302, and Lys-326 together coordinate NAD(+). Positions 420, 423, 444, and 450 each coordinate Zn(2+). Residues 623-701 form the BRCT domain; sequence ANDSPVAGKT…EDEWFDLIGA (79 aa).

The protein belongs to the NAD-dependent DNA ligase family. LigA subfamily. Mg(2+) is required as a cofactor. The cofactor is Mn(2+).

The enzyme catalyses NAD(+) + (deoxyribonucleotide)n-3'-hydroxyl + 5'-phospho-(deoxyribonucleotide)m = (deoxyribonucleotide)n+m + AMP + beta-nicotinamide D-nucleotide.. Functionally, DNA ligase that catalyzes the formation of phosphodiester linkages between 5'-phosphoryl and 3'-hydroxyl groups in double-stranded DNA using NAD as a coenzyme and as the energy source for the reaction. It is essential for DNA replication and repair of damaged DNA. The chain is DNA ligase from Maricaulis maris (strain MCS10) (Caulobacter maris).